The following is a 141-amino-acid chain: Galactose-6-phosphate isomerase subunit LacA (141 aa).

The protein belongs to the LacAB/RpiB family. As to quaternary structure, heteromultimeric protein consisting of LacA and LacB.

It carries out the reaction aldehydo-D-galactose 6-phosphate = keto-D-tagatose 6-phosphate. The protein operates within carbohydrate metabolism; D-galactose 6-phosphate degradation; D-tagatose 6-phosphate from D-galactose 6-phosphate: step 1/1. This is Galactose-6-phosphate isomerase subunit LacA from Streptococcus pneumoniae (strain ATCC 700669 / Spain 23F-1).